A 451-amino-acid polypeptide reads, in one-letter code: MVSWDKAHLGPKYVGLWDFKARTDEELSFQAGDLLHVTKKEELWWWATLLDAEGKALAEGYVPHNYLAEKETVESEPWFFGCISRSEAMHRLQAEDNSKGAFLIRVSQKPGADYVLSVRDAQAVRHYRIWKNNEGRLHLNEAVSFSNLSELVDYHKTQSLSHGLQLSMPCWKHKTEPLPHWDDWERPREEFTLCKKLGAGYFGEVFEALWKGQVHVAVKVISRDNLLHQHTFQAEIQAMKKLRHKHILSLYAVATAGDPVYIITELMPKGNLLQLLRDSDEKALPILELVDFASQVAEGMCYLESQNYIHRDLAARNVLVTENNLCKVGDFGLARLVKEDIYLSHEHNVPYKWTAPEALSRGHYSIKSDVWSFGVLLHEIFSRGQMPYPGMSNHETFLRVDAGYRMPCPLECPPNIHKLMLSCWSRDPKQRPCFKDLCEKLTGITRYENLV.

Positions 8-72 (HLGPKYVGLW…PHNYLAEKET (65 aa)) constitute an SH3 domain. A phosphotyrosine mark is found at Tyr13, Tyr61, Tyr66, and Tyr114. The 93-residue stretch at 78–170 (WFFGCISRSE…SHGLQLSMPC (93 aa)) folds into the SH2 domain. The interval 171-190 (WKHKTEPLPHWDDWERPREE) is linker. Residues 191 to 445 (FTLCKKLGAG…DLCEKLTGIT (255 aa)) form the Protein kinase domain. ATP is bound by residues 197 to 205 (LGAGYFGEV) and Lys219. Asp312 acts as the Proton acceptor in catalysis. Phosphotyrosine; by autocatalysis is present on Tyr342. Tyr351 and Tyr447 each carry phosphotyrosine.

Belongs to the protein kinase superfamily. Tyr protein kinase family. BRK/PTK6/SIK subfamily. In terms of assembly, interacts with KHDRBS1. Interacts with phosphorylated IRS4. Interacts with GAP-A.p65. Interacts with ADAM15. Interacts (via SH3 and SH2 domains) with phosphorylated IRS4. Interacts (via SH3 domain) with SFPQ. Interacts with EGFR and ERBB2. Interacts with STAP2. Interacts with PNX. Interacts with SFPQ. Interacts with PTK/ATK. Interacts with CTNNB1. Autophosphorylated. Autophosphorylation of Tyr-342 leads to an increase of kinase activity. Tyr-447 binds to the SH2 domain when phosphorylated and negatively regulates kinase activity. In terms of tissue distribution, expressed only in epithelial tissues, including the skin and lining of the alimentary canal. Restricted to the cell layers immediately above the proliferative cell zone in these epithelia.

The protein localises to the cytoplasm. It localises to the nucleus. Its subcellular location is the membrane. It is found in the cell projection. The protein resides in the ruffle. The enzyme catalyses L-tyrosyl-[protein] + ATP = O-phospho-L-tyrosyl-[protein] + ADP + H(+). With respect to regulation, activated by EGF, NRG1 and IGF1. Inhibited by SOCS3 to phosphorylate STAT3. Stabilized in the inactive form by an association between the SH3 domain and the SH2-TK linker region. Interaction between Trp-184 within SH2-TK linker region and the catalytic domain appears essential for positive regulation of kinase activity. Non-receptor tyrosine-protein kinase implicated in the regulation of a variety of signaling pathways that control the differentiation and maintenance of normal epithelia, as well as tumor growth. Function seems to be context dependent and differ depending on cell type, as well as its intracellular localization. A number of potential nuclear and cytoplasmic substrates have been identified. These include the RNA-binding proteins: KHDRBS1/SAM68, KHDRBS2/SLM1, KHDRBS3/SLM2 and SFPQ/PSF; transcription factors: STAT3 and STAT5A/B and a variety of signaling molecules: ARHGAP35/p190RhoGAP, PXN/paxillin, BTK/ATK, STAP2/BKS. Phosphorylates the GTPase-activating protein ARAP1 following EGF stimulation which enhances EGFR signaling by delaying EGFR down-regulation. Also associates with a variety of proteins that are likely upstream of PTK6 in various signaling pathways, or for which PTK6 may play an adapter-like role. These proteins include ADAM15, EGFR, ERBB2, ERBB3 and IRS4. In normal or non-tumorigenic tissues, PTK6 promotes cellular differentiation and apoptosis. In tumors PTK6 contributes to cancer progression by sensitizing cells to mitogenic signals and enhancing proliferation, anchorage-independent survival and migration/invasion. Association with EGFR, ERBB2, ERBB3 may contribute to mammary tumor development and growth through enhancement of EGF-induced signaling via BTK/AKT and PI3 kinase. Contributes to migration and proliferation by contributing to EGF-mediated phosphorylation of ARHGAP35/p190RhoGAP, which promotes association with RASA1/p120RasGAP, inactivating RhoA while activating RAS. EGF stimulation resulted in phosphorylation of PNX/Paxillin by PTK6 and activation of RAC1 via CRK/CrKII, thereby promoting migration and invasion. PTK6 activates STAT3 and STAT5B to promote proliferation. Nuclear PTK6 may be important for regulating growth in normal epithelia, while cytoplasmic PTK6 might activate oncogenic signaling pathways. In Mus musculus (Mouse), this protein is Protein-tyrosine kinase 6 (Ptk6).